The sequence spans 148 residues: Arginine repressor (148 aa).

It belongs to the ArgR family.

It is found in the cytoplasm. The protein operates within amino-acid biosynthesis; L-arginine biosynthesis [regulation]. Regulates arginine biosynthesis genes. This Chlorobium luteolum (strain DSM 273 / BCRC 81028 / 2530) (Pelodictyon luteolum) protein is Arginine repressor.